A 139-amino-acid polypeptide reads, in one-letter code: Maximins 4/H3 type 6 (139 aa).

A signal peptide spans 1-18 (MNFKYIVAVSFLIASAYA). The propeptide occupies 19-43 (RSVQNDEQSLSQRDVLEEESLREIR). At Asn70 the chain carries Asparagine amide. Residues 74 to 118 (TAEDHEVMKRLEAVMRDLDSLDHPEEASERETRGFNQDEIAKEKR) constitute a propeptide that is removed on maturation. Ile138 is modified (isoleucine amide).

It belongs to the bombinin family. Expressed by the skin glands.

The protein localises to the secreted. Its function is as follows. Maximin-4 shows antibacterial activity against both Gram-positive and Gram-negative bacteria. It also shows antimicrobial activity against the fungus C.albicans, but not against A.flavus nor P.uticale. It has little hemolytic activity. It does not possess a significant cytotoxicity against tumor cell lines. It does not possess a significant anti-HIV activity. In terms of biological role, maximin-H3 shows antibacterial activity against both Gram-positive and Gram-negative bacteria. It also shows antimicrobial activity against the fungus C.albicans. Shows strong hemolytic activity. The chain is Maximins 4/H3 type 6 from Bombina maxima (Giant fire-bellied toad).